Here is a 207-residue protein sequence, read N- to C-terminus: Small ribosomal subunit protein uS4 (207 aa).

The disordered stretch occupies residues 26-53 (KPFDVKTKKHAKAPGQHGQARGKQSEYS). An S4 RNA-binding domain is found at 97 to 159 (SRLDNVVYRM…AKQQLRIKNA (63 aa)).

The protein belongs to the universal ribosomal protein uS4 family. Part of the 30S ribosomal subunit. Contacts protein S5. The interaction surface between S4 and S5 is involved in control of translational fidelity.

One of the primary rRNA binding proteins, it binds directly to 16S rRNA where it nucleates assembly of the body of the 30S subunit. Functionally, with S5 and S12 plays an important role in translational accuracy. This Acinetobacter baylyi (strain ATCC 33305 / BD413 / ADP1) protein is Small ribosomal subunit protein uS4.